The chain runs to 439 residues: tRNA-2-methylthio-N(6)-dimethylallyladenosine synthase (439 aa).

One can recognise an MTTase N-terminal domain in the interval 1–117 (MKFYIRTFGC…IGNLVKRALN (117 aa)). 6 residues coordinate [4Fe-4S] cluster: C10, C46, C80, C153, C157, and C160. Residues 139–371 (PISKHHAWIT…MELQKRINLE (233 aa)) enclose the Radical SAM core domain. Positions 369-436 (NLEENEKYLE…PGPLYGEVVN (68 aa)) constitute a TRAM domain.

It belongs to the methylthiotransferase family. MiaB subfamily. As to quaternary structure, monomer. Requires [4Fe-4S] cluster as cofactor.

The protein localises to the cytoplasm. The catalysed reaction is N(6)-dimethylallyladenosine(37) in tRNA + (sulfur carrier)-SH + AH2 + 2 S-adenosyl-L-methionine = 2-methylsulfanyl-N(6)-dimethylallyladenosine(37) in tRNA + (sulfur carrier)-H + 5'-deoxyadenosine + L-methionine + A + S-adenosyl-L-homocysteine + 2 H(+). Its function is as follows. Catalyzes the methylthiolation of N6-(dimethylallyl)adenosine (i(6)A), leading to the formation of 2-methylthio-N6-(dimethylallyl)adenosine (ms(2)i(6)A) at position 37 in tRNAs that read codons beginning with uridine. The chain is tRNA-2-methylthio-N(6)-dimethylallyladenosine synthase from Petrotoga mobilis (strain DSM 10674 / SJ95).